A 131-amino-acid polypeptide reads, in one-letter code: Glycine cleavage system H protein (131 aa).

In terms of domain architecture, Lipoyl-binding spans Arg24 to Glu106. N6-lipoyllysine is present on Lys65.

It belongs to the GcvH family. In terms of assembly, the glycine cleavage system is composed of four proteins: P, T, L and H. Requires (R)-lipoate as cofactor.

Functionally, the glycine cleavage system catalyzes the degradation of glycine. The H protein shuttles the methylamine group of glycine from the P protein to the T protein. This Xylella fastidiosa (strain 9a5c) protein is Glycine cleavage system H protein.